The primary structure comprises 123 residues: Small ribosomal subunit protein uS12c (123 aa).

This sequence belongs to the universal ribosomal protein uS12 family. In terms of assembly, part of the 30S ribosomal subunit.

The protein resides in the plastid. Its subcellular location is the chloroplast. In terms of biological role, with S4 and S5 plays an important role in translational accuracy. Located at the interface of the 30S and 50S subunits. The chain is Small ribosomal subunit protein uS12c (rps12) from Pinus thunbergii (Japanese black pine).